The chain runs to 65 residues: Large ribosomal subunit protein bL35 (65 aa).

This sequence belongs to the bacterial ribosomal protein bL35 family.

The protein is Large ribosomal subunit protein bL35 of Yersinia pseudotuberculosis serotype O:1b (strain IP 31758).